The chain runs to 405 residues: Tyrosine--tRNA ligase (405 aa).

Tyr35 contributes to the L-tyrosine binding site. A 'HIGH' region motif is present at residues 40–49 (TTSSSLHIGH). Tyr166 and Gln170 together coordinate L-tyrosine. A 'KMSKS' region motif is present at residues 226–230 (KMGKS). Lys229 is an ATP binding site. The region spanning 340–404 (ILLIDLMLDS…VGKKKFLRIV (65 aa)) is the S4 RNA-binding domain.

This sequence belongs to the class-I aminoacyl-tRNA synthetase family. TyrS type 1 subfamily. In terms of assembly, homodimer.

The protein resides in the cytoplasm. The enzyme catalyses tRNA(Tyr) + L-tyrosine + ATP = L-tyrosyl-tRNA(Tyr) + AMP + diphosphate + H(+). Functionally, catalyzes the attachment of tyrosine to tRNA(Tyr) in a two-step reaction: tyrosine is first activated by ATP to form Tyr-AMP and then transferred to the acceptor end of tRNA(Tyr). The protein is Tyrosine--tRNA ligase of Borrelia garinii subsp. bavariensis (strain ATCC BAA-2496 / DSM 23469 / PBi) (Borreliella bavariensis).